We begin with the raw amino-acid sequence, 197 residues long: Protein GrpE (197 aa).

Basic and acidic residues predominate over residues 1–31; the sequence is MSDDTKKQDTAADAEVEKEMEGVPEHLRDDR. Residues 1 to 48 are disordered; that stretch reads MSDDTKKQDTAADAEVEKEMEGVPEHLRDDRGSEEDASDDLSAALESL.

It belongs to the GrpE family. As to quaternary structure, homodimer.

It localises to the cytoplasm. Functionally, participates actively in the response to hyperosmotic and heat shock by preventing the aggregation of stress-denatured proteins, in association with DnaK and GrpE. It is the nucleotide exchange factor for DnaK and may function as a thermosensor. Unfolded proteins bind initially to DnaJ; upon interaction with the DnaJ-bound protein, DnaK hydrolyzes its bound ATP, resulting in the formation of a stable complex. GrpE releases ADP from DnaK; ATP binding to DnaK triggers the release of the substrate protein, thus completing the reaction cycle. Several rounds of ATP-dependent interactions between DnaJ, DnaK and GrpE are required for fully efficient folding. The sequence is that of Protein GrpE from Erythrobacter litoralis (strain HTCC2594).